The following is a 431-amino-acid chain: Glutamate-1-semialdehyde 2,1-aminomutase (431 aa).

K269 carries the N6-(pyridoxal phosphate)lysine modification.

Belongs to the class-III pyridoxal-phosphate-dependent aminotransferase family. HemL subfamily. In terms of assembly, homodimer. It depends on pyridoxal 5'-phosphate as a cofactor.

The protein resides in the cytoplasm. It carries out the reaction (S)-4-amino-5-oxopentanoate = 5-aminolevulinate. It functions in the pathway porphyrin-containing compound metabolism; protoporphyrin-IX biosynthesis; 5-aminolevulinate from L-glutamyl-tRNA(Glu): step 2/2. The chain is Glutamate-1-semialdehyde 2,1-aminomutase from Francisella tularensis subsp. holarctica (strain FTNF002-00 / FTA).